The primary structure comprises 129 residues: Large ribosomal subunit protein bL17 (129 aa).

Belongs to the bacterial ribosomal protein bL17 family. Part of the 50S ribosomal subunit. Contacts protein L32.

The chain is Large ribosomal subunit protein bL17 from Thiobacillus denitrificans (strain ATCC 25259 / T1).